A 178-amino-acid polypeptide reads, in one-letter code: MANKLFLVSATLAFFFLLTNASIYRTVVEFDEDDATNPAGPFRIPKCRKEFQQAQHLKACQQWLHKQAMQSGSGPSWTLDGEFDFEDDMENPQGPQQRPPLLQQCCNELHQEEPLCVCPTLKGASKAVKQQIQQQGQQQGKLQMVSRIYQTATHLPKVCKIPQVSVCPFQKTMPGPSY.

An N-terminal signal peptide occupies residues 1 to 21; the sequence is MANKLFLVSATLAFFFLLTNA. 2 propeptides span residues 22-38 and 75-94; these read SIYR…ATNP and PSWT…NPQG.

The protein belongs to the 2S seed storage albumins family. As to quaternary structure, the mature protein consists of a small and a large chain linked by disulfide bonds. As to expression, cotyledons and the axis.

In terms of biological role, the small, basic, water-soluble napins are one of the two major kinds of storage proteins synthesized in the seed during its maturation. The protein is Napin-B (NAPB) of Brassica napus (Rape).